Consider the following 443-residue polypeptide: ATP-dependent protease ATPase subunit HslU (443 aa).

ATP is bound by residues isoleucine 18, 60 to 65 (GVGKTE), aspartate 256, glutamate 321, and arginine 393.

It belongs to the ClpX chaperone family. HslU subfamily. As to quaternary structure, a double ring-shaped homohexamer of HslV is capped on each side by a ring-shaped HslU homohexamer. The assembly of the HslU/HslV complex is dependent on binding of ATP.

The protein localises to the cytoplasm. Its function is as follows. ATPase subunit of a proteasome-like degradation complex; this subunit has chaperone activity. The binding of ATP and its subsequent hydrolysis by HslU are essential for unfolding of protein substrates subsequently hydrolyzed by HslV. HslU recognizes the N-terminal part of its protein substrates and unfolds these before they are guided to HslV for hydrolysis. The chain is ATP-dependent protease ATPase subunit HslU from Edwardsiella ictaluri (strain 93-146).